Reading from the N-terminus, the 815-residue chain is Phenylalanine--tRNA ligase beta subunit (815 aa).

The tRNA-binding domain maps to Ala39–Thr148. The B5 domain occupies Leu420 to Ser495. Mg(2+)-binding residues include Asp473, Asp479, Glu482, and Glu483. The FDX-ACB domain occupies Ser721 to Arg814.

It belongs to the phenylalanyl-tRNA synthetase beta subunit family. Type 1 subfamily. Tetramer of two alpha and two beta subunits. It depends on Mg(2+) as a cofactor.

It localises to the cytoplasm. The enzyme catalyses tRNA(Phe) + L-phenylalanine + ATP = L-phenylalanyl-tRNA(Phe) + AMP + diphosphate + H(+). This is Phenylalanine--tRNA ligase beta subunit from Rickettsia typhi (strain ATCC VR-144 / Wilmington).